Here is a 345-residue protein sequence, read N- to C-terminus: Protein RecA (345 aa).

80–87 (GPESSGKT) is an ATP binding site.

Belongs to the RecA family.

Its subcellular location is the cytoplasm. Can catalyze the hydrolysis of ATP in the presence of single-stranded DNA, the ATP-dependent uptake of single-stranded DNA by duplex DNA, and the ATP-dependent hybridization of homologous single-stranded DNAs. It interacts with LexA causing its activation and leading to its autocatalytic cleavage. In Mycoplasma mycoides subsp. mycoides SC (strain CCUG 32753 / NCTC 10114 / PG1), this protein is Protein RecA.